Here is a 302-residue protein sequence, read N- to C-terminus: Protein FLOURY 1 (302 aa).

2 helical membrane-spanning segments follow: residues 27 to 47 (SAGA…VAVL) and 82 to 102 (LAGS…FLAV). The disordered stretch occupies residues 160-195 (SSKPVSRSLAAEFDQEADGEEEDNAGETSDPDDGSV). The segment covering 172–192 (FDQEADGEEEDNAGETSDPDD) has biased composition (acidic residues). The region spanning 193–299 (GSVQYLRRRL…ALSETSEDDR (107 aa)) is the GTD-binding domain. The stretch at 199 to 254 (RRRLKEEMLLKEVALEELEKERHAAASAADEAMSKIACLRSEKALVEREARQFQEM) forms a coiled coil. A disordered region spans residues 283 to 302 (PEAITDRALSETSEDDRDKK).

As to quaternary structure, interacts (via C-terminus) with both 22 kDa and 19 kDa alpha-zeins. Interacts (via C-terminus) with OP10 (via N-terminus). In terms of tissue distribution, expressed in endosperm. Not detected in embryo, leaves and roots.

The protein localises to the endoplasmic reticulum membrane. Involved in protein body development and 22 kDa alpha-zein localization. This is Protein FLOURY 1 from Zea mays (Maize).